Here is a 291-residue protein sequence, read N- to C-terminus: E3 ubiquitin-protein ligase MARCHF8 (291 aa).

Positions 22-72 (YRSKTKEKEREEQNEKTLGHFMSHSSNISKAGSPPSASAPAPVSSFSRTSI) are disordered. Residues 25–39 (KTKEKEREEQNEKTL) are compositionally biased toward basic and acidic residues. Over residues 50–72 (SKAGSPPSASAPAPVSSFSRTSI) the composition is skewed to low complexity. The segment at 72 to 133 (ITPSSQDICR…ELCKYEFIME (62 aa)) adopts an RING-CH-type zinc-finger fold. 8 residues coordinate Zn(2+): cysteine 80, cysteine 83, cysteine 97, cysteine 99, histidine 107, cysteine 110, cysteine 123, and cysteine 126. 2 consecutive transmembrane segments (helical) span residues 157-177 (CSVT…YVLI) and 197-217 (FWTK…FMYV). At serine 253 the chain carries Phosphoserine.

In terms of assembly, interacts with CD86. As to expression, broadly expressed. Present in immature dendritic cells (at protein level).

It localises to the golgi apparatus membrane. It is found in the endoplasmic reticulum membrane. The protein localises to the cytoplasmic vesicle membrane. Its subcellular location is the lysosome membrane. The protein resides in the early endosome membrane. The catalysed reaction is S-ubiquitinyl-[E2 ubiquitin-conjugating enzyme]-L-cysteine + [acceptor protein]-L-lysine = [E2 ubiquitin-conjugating enzyme]-L-cysteine + N(6)-ubiquitinyl-[acceptor protein]-L-lysine.. The protein operates within protein modification; protein ubiquitination. Functionally, E3 ubiquitin-protein ligase that plays several important roles in innate immunity and adaptive immunity. Mediates ubiquitination of CD86 and MHC class II proteins, such as HLA-DR alpha and beta, and promotes their subsequent endocytosis and sorting to lysosomes via multivesicular bodies. Possesses a very broad antiviral activity by specifically inactivating different viral fusion proteins. Targets and ubiquitinates cytoplasmic lysine residues of viral envelope glycoproteins with single transmembrane domains leading to their lysosomal degradation. Therefore, shows broad-spectrum inhibition against many viruses including retroviruses, rhabdoviruses, arenaviruses, sarbecoviruses or influenzaviruses. Strongly blocks human immunodeficiency virus type 1 envelope glycoprotein incorporation into virions by down-regulating its cell surface expression. Also blocks ebola virus glycoprotein/GP incorporation via surface down-regulation. Mediates 'Lys-63'-linked polyubiquitination of influenza M2 to target it to lysosome for degradation. Mediates the regulation of constitutive ubiquitination and trafficking of the viral restriction factor BST2 within the endocytic pathway. Plays a role in maintenance of immune tolerance to self by promoting the turnover and proteasomal degradation of PD-L1/CD274 via ubiquitination. Catalyzes the 'Lys-63'-linked polyubiquitylation of cGAS thereby inhibiting its DNA binding ability and impairing its antiviral innate immunity. Negatively regulates IL7-mediated T-cell homeostasis by mediating 'Lys-27'-linked polyubiquitination of IL7R, leading to its lysosomal degradation. Its function is as follows. (Microbial infection) Mediates 'Lys-63'-linked polyubiquitination of hepatitis C virus/HCV protein NS2 which allows its binding to HGS, an ESCRT-0 complex component, and this interaction is essential for HCV envelopment. The polypeptide is E3 ubiquitin-protein ligase MARCHF8 (Homo sapiens (Human)).